A 363-amino-acid chain; its full sequence is Phospho-N-acetylmuramoyl-pentapeptide-transferase (363 aa).

A run of 10 helical transmembrane segments spans residues 27–47 (SGCA…PFIA), 76–96 (TMGG…WADL), 97–117 (TNGF…VGFA), 137–157 (LGCE…LTPP), 171–191 (VLLP…TGFG), 202–222 (GLAI…SYLV), 242–262 (LAVF…FNAP), 265–285 (AVFM…AVAV), 292–312 (VLCI…IQIF), and 340–360 (KIVI…LATL).

This sequence belongs to the glycosyltransferase 4 family. MraY subfamily. Mg(2+) serves as cofactor.

It localises to the cell inner membrane. The enzyme catalyses UDP-N-acetyl-alpha-D-muramoyl-L-alanyl-gamma-D-glutamyl-meso-2,6-diaminopimeloyl-D-alanyl-D-alanine + di-trans,octa-cis-undecaprenyl phosphate = di-trans,octa-cis-undecaprenyl diphospho-N-acetyl-alpha-D-muramoyl-L-alanyl-D-glutamyl-meso-2,6-diaminopimeloyl-D-alanyl-D-alanine + UMP. Its pathway is cell wall biogenesis; peptidoglycan biosynthesis. Its function is as follows. Catalyzes the initial step of the lipid cycle reactions in the biosynthesis of the cell wall peptidoglycan: transfers peptidoglycan precursor phospho-MurNAc-pentapeptide from UDP-MurNAc-pentapeptide onto the lipid carrier undecaprenyl phosphate, yielding undecaprenyl-pyrophosphoryl-MurNAc-pentapeptide, known as lipid I. This is Phospho-N-acetylmuramoyl-pentapeptide-transferase from Gluconobacter oxydans (strain 621H) (Gluconobacter suboxydans).